The chain runs to 658 residues: Aspartate--tRNA ligase, mitochondrial (658 aa).

Glu-198 lines the L-aspartate pocket. Residues 226-229 (QQYK) form an aspartate region. Residue Arg-248 coordinates L-aspartate. Residues 248 to 250 (RDE) and Glu-553 contribute to the ATP site. Arg-560 contributes to the L-aspartate binding site. ATP is bound at residue 604–607 (GFDR).

The protein belongs to the class-II aminoacyl-tRNA synthetase family. Type 1 subfamily.

Its subcellular location is the mitochondrion matrix. It catalyses the reaction tRNA(Asp) + L-aspartate + ATP = L-aspartyl-tRNA(Asp) + AMP + diphosphate. In terms of biological role, catalyzes the attachment of aspartate to tRNA(Asp) in the mitochondrion. This chain is Aspartate--tRNA ligase, mitochondrial (MSD1), found in Saccharomyces cerevisiae (strain ATCC 204508 / S288c) (Baker's yeast).